The sequence spans 974 residues: MSDQKFISIRGAREHNLKNVDLDLPRDKLIVMTGLSGSGKSSLAFDTIYAEGQRRYVESLSAYARQFLEMMQKPDVDQIDGLSPAISIEQKTTSRNPRSTVGTVTEIYDYMRLLFARVGIPYSPATGLPIESQTVSQMVDRVIALEEGTRLYILAPIVRGRKGEYRKELAELQKKGFQRVKVDGTFYEIADVPPLDKKYKHDIDVVVDRVVVRPDLSTRLADSLETCLKLADGLAIAEFADKPLPVGETAEGGSANKSANETHERILFSEKFACPVSGFTIPEIEPRLFSFNNPFGACPTCDGLGTQQAIDPNLIIPDESAALKDGAVAPWARSSSPYYNQTLEALGKAYGFKVSARWSELSEEARQAILYGTKGREITFHYDDGLRSYQTTKPFEGVIPNLERRWKETDSAWSREEIERFMASTPCPACNGYRLKPEALSVKIGKKHIGEITEMSIRKADAWFRDIDGSFNEKQREIAARILKEIRERLQFLNDVGLDYLTLARNSGTLSGGESQRIRLASQIGSGLTGVLYVLDEPSIGLHQRDNARLLDTLRHLRDLGNTVIVVEHDEDAILTADYVVDIGPAAGVHGGKVIAQGSPQDIMANTNSLTGKYLSGAMEVAVPAERRKISKTKRLRVVGARGNNLKNVSADIPLGTFTAVTGVSGGGKSTFLIETLFKAASRRIMGSREHPAEYDRIEGLEFLDKVIDIDQSPIGRTPRSNPATYTGAFTPIRDWFAGLPEAKARGYQPGRFSFNVKGGRCEACQGDGVIKIEMHFLPDVYVTCDVCHGKRYNRETLDVLFKGKSIADVLDMTVEEGAEFFSAVPAVRDKLETLVKVGLGYIKVGQQATTLSGGEAQRVKLAKELSRRATGRTLYILDEPTTGLHFHDVAKLLEVLHELVEQGNTVVVIEHNLEVIKTADWVIDLGPEGGDGGGEIVAVGRPEDIVQEKRSYTGQFLKELLERRPKRSSQAAE.

Residue Gly-34 to Ser-41 coordinates ATP. ABC transporter domains follow at residues Trp-331 to Leu-610 and Ile-630 to Lys-959. Gly-663 to Ser-670 provides a ligand contact to ATP. Residues Cys-762 to Cys-788 form a C4-type zinc finger.

This sequence belongs to the ABC transporter superfamily. UvrA family. In terms of assembly, forms a heterotetramer with UvrB during the search for lesions.

It is found in the cytoplasm. Its function is as follows. The UvrABC repair system catalyzes the recognition and processing of DNA lesions. UvrA is an ATPase and a DNA-binding protein. A damage recognition complex composed of 2 UvrA and 2 UvrB subunits scans DNA for abnormalities. When the presence of a lesion has been verified by UvrB, the UvrA molecules dissociate. The chain is UvrABC system protein A from Brucella suis biovar 1 (strain 1330).